Consider the following 227-residue polypeptide: UPF0173 metal-dependent hydrolase Bsph_4138 (227 aa).

It belongs to the UPF0173 family.

The protein is UPF0173 metal-dependent hydrolase Bsph_4138 of Lysinibacillus sphaericus (strain C3-41).